The chain runs to 231 residues: NADH-ubiquinone oxidoreductase chain 4 (231 aa).

6 helical membrane-spanning segments follow: residues 1–21 (PIAG…YGII), 34–54 (TFLP…LTCL), 61–80 (SLIA…AIII), 84–106 (WGLS…LFCL), 118–138 (ILIL…WWLL), and 156–178 (LLIM…LSML).

It belongs to the complex I subunit 4 family.

It is found in the mitochondrion membrane. It catalyses the reaction a ubiquinone + NADH + 5 H(+)(in) = a ubiquinol + NAD(+) + 4 H(+)(out). Core subunit of the mitochondrial membrane respiratory chain NADH dehydrogenase (Complex I) that is believed to belong to the minimal assembly required for catalysis. Complex I functions in the transfer of electrons from NADH to the respiratory chain. The immediate electron acceptor for the enzyme is believed to be ubiquinone. The protein is NADH-ubiquinone oxidoreductase chain 4 (MT-ND4) of Trimeresurus albolabris (White-lipped pit viper).